The primary structure comprises 814 residues: Syn-copalyl diphosphate synthase TPS3, chloroplastic (814 aa).

Residues 1–52 (MCSLSTLSPNFSNAYGSKSVSSTASRFPCWQRSNETWKTQSREVIHWTYVVR) constitute a chloroplast transit peptide. A substrate-binding site is contributed by K248. 2 residues coordinate Mg(2+): D386 and D388. A DXDD motif motif is present at residues 386-389 (DIDD). K472 contacts substrate.

It belongs to the terpene synthase family. Requires Mg(2+) as cofactor. Mostly expressed in trichomes of leaves and fruits.

It localises to the plastid. The protein resides in the chloroplast. It catalyses the reaction (2E,6E,10E)-geranylgeranyl diphosphate = 9alpha-copalyl diphosphate. It participates in secondary metabolite biosynthesis; terpenoid biosynthesis. In terms of biological role, involved in the biosynthesis of labdane-type diterpenoid including cleroda-dienols, and peregrinol lactones and furan derivatives, dopaminergic diterpenoids that can bind to dopamine receptors in the human pituitary gland, have probably ability to lower prolactin levels, and are used to treat menstrual cycle disorders (e.g. premenstrual syndrome and mastodynia). Terpene synthase that produces syn-copalyl diphosophate from geranylgeranyl diphosphate (GGPP). This is Syn-copalyl diphosphate synthase TPS3, chloroplastic from Vitex agnus-castus (Chaste tree).